We begin with the raw amino-acid sequence, 459 residues long: Glutamate--tRNA ligase 1 (459 aa).

Residues 8-18 (PSPTGYIHIGN) carry the 'HIGH' region motif. The 'KMSKS' region signature appears at 249 to 253 (GLSKR). Residue K252 coordinates ATP.

Belongs to the class-I aminoacyl-tRNA synthetase family. Glutamate--tRNA ligase type 1 subfamily. As to quaternary structure, monomer.

The protein localises to the cytoplasm. The enzyme catalyses tRNA(Glu) + L-glutamate + ATP = L-glutamyl-tRNA(Glu) + AMP + diphosphate. Functionally, catalyzes the attachment of glutamate to tRNA(Glu) in a two-step reaction: glutamate is first activated by ATP to form Glu-AMP and then transferred to the acceptor end of tRNA(Glu). The chain is Glutamate--tRNA ligase 1 from Bartonella quintana (strain Toulouse) (Rochalimaea quintana).